Reading from the N-terminus, the 302-residue chain is RNA polymerase II holoenzyme cyclin-like subunit (302 aa).

Positions 53 to 142 (QQLIKLGKRM…LGECEFSLIS (90 aa)) constitute a Cyclin N-terminal domain.

This sequence belongs to the cyclin family. Cyclin C subfamily. As to quaternary structure, component of the srb8-11 complex, a regulatory module of the Mediator complex.

The protein localises to the nucleus. In terms of biological role, component of the srb8-11 complex. The srb8-11 complex is a regulatory module of the Mediator complex which is itself involved in regulation of basal and activated RNA polymerase II-dependent transcription. The srb8-11 complex may be involved in the transcriptional repression of a subset of genes regulated by Mediator. It may inhibit the association of the Mediator complex with RNA polymerase II to form the holoenzyme complex. The srb8-11 complex phosphorylates the C-terminal domain (CTD) of the largest subunit of RNA polymerase II. The protein is RNA polymerase II holoenzyme cyclin-like subunit (ssn8) of Aspergillus clavatus (strain ATCC 1007 / CBS 513.65 / DSM 816 / NCTC 3887 / NRRL 1 / QM 1276 / 107).